Consider the following 38-residue polypeptide: Large ribosomal subunit protein bL36 (38 aa).

Belongs to the bacterial ribosomal protein bL36 family.

The polypeptide is Large ribosomal subunit protein bL36 (Ectopseudomonas mendocina (strain ymp) (Pseudomonas mendocina)).